Consider the following 176-residue polypeptide: Probable DNA-directed RNA polymerase subunit delta (176 aa).

The HTH HARE-type domain maps to 14-81; it reads KSFIDMAYTL…GENLWGLRDW (68 aa). Residues 114 to 176 form a disordered region; it reads LGEDEMDDDD…VFEDEEDFND (63 aa). Composition is skewed to acidic residues over residues 116 to 145 and 153 to 176; these read EDEM…QVEE and VIEE…DFND.

It belongs to the RpoE family. RNAP is composed of a core of 2 alpha, a beta and a beta' subunits. The core is associated with a delta subunit and one of several sigma factors.

Its function is as follows. Participates in both the initiation and recycling phases of transcription. In the presence of the delta subunit, RNAP displays an increased specificity of transcription, a decreased affinity for nucleic acids, and an increased efficiency of RNA synthesis because of enhanced recycling. The sequence is that of Probable DNA-directed RNA polymerase subunit delta from Staphylococcus aureus (strain JH1).